A 699-amino-acid polypeptide reads, in one-letter code: MSRDRFRSRGGGGGGFHRRGGGGGRGGLHDFRSPPPGMGLNQNRGPMGPGPGGPKPPLPPPPPHQQQQQPPPQQPPPQQPPPHQQPPPHQPPHQQPPPPPQESKPVVPQGPGSAPGVSSAPPPAVSAPPANPPTTGAPPGPGPTPTPPPAVPSTAPGPPPPSTPSSGVSTTPPQTGGPPPPPAGGAGPGPKPGPGPGGPKGGKMPGGPKPGGGPGMGAPGGHPKPPHRGGGEPRGGRQHHAPYHQQHHQGPPPGGPGPRTEEKISDSEGFKANLSLLRRPGEKTYTQRCRLFVGNLPADITEDEFKRLFAKYGEPGEVFINKGKGFGFIKLESRALAEIAKAELDDTPMRGRQLRVRFATHAAALSVRNLSPYVSNELLEEAFSQFGPIERAVVIVDDRGRSTGKGIVEFASKPAARKAFERCSEGVFLLTTTPRPVIVEPLEQLDDEDGLPEKLAQKNPMYQKERETPPRFAQHGTFEYEYSQRWKSLDEMEKQQREQVEKNMKDAKDKLESEMEDAYHEHQANLLRQDLMRRQEELRRMEELHSQEMQKRKEMQLRQEEERRRREEEMMIRQREMEEQMRRQREESYSRMGYMDPRERDMRMGGGGTMNMGDPYGSGGQKFPPLGGGGGIGYEANPGVPPATMSGSMMGSDMRTERFGQGGAGPVGGQGPRGMGPGTPAGYGRGREEYEGPNKKPRF.

The segment at 1–265 is disordered; that stretch reads MSRDRFRSRG…PGPRTEEKIS (265 aa). At Ser8 the chain carries Phosphoserine; by MKNK2. At Arg9 the chain carries Asymmetric dimethylarginine; alternate. Arg9 bears the Omega-N-methylarginine; alternate mark. A run of 3 repeats spans residues 9–11, 19–21, and 25–27. Residues 9-26 show a composition bias toward gly residues; that stretch reads RGGGGGGFHRRGGGGGRG. The segment at 9-27 is 3 X 3 AA repeats of R-G-G; the sequence is RGGGGGGFHRRGGGGGRGG. Position 33 is a phosphoserine (Ser33). Residues 48–102 show a composition bias toward pro residues; it reads GPGPGGPKPPLPPPPPHQQQQQPPPQQPPPQQPPPHQQPPPHQPPHQQPPPPPQE. The span at 105 to 119 shows a compositional bias: low complexity; it reads PVVPQGPGSAPGVSS. The segment covering 120–163 has biased composition (pro residues); it reads APPPAVSAPPANPPTTGAPPGPGPTPTPPPAVPSTAPGPPPPST. Residues 164–174 show a composition bias toward low complexity; it reads PSSGVSTTPPQ. Pro residues predominate over residues 175 to 197; sequence TGGPPPPPAGGAGPGPKPGPGPG. Residues 198 to 220 show a composition bias toward gly residues; the sequence is GPKGGKMPGGPKPGGGPGMGAPG. N6-acetyllysine is present on Lys200. Arg228, Arg234, and Arg237 each carry omega-N-methylarginine. Positions 236–247 are enriched in basic residues; it reads GRQHHAPYHQQH. Lys263 participates in a covalent cross-link: Glycyl lysine isopeptide (Lys-Gly) (interchain with G-Cter in SUMO2). At Ser265 the chain carries Phosphoserine. A Glycyl lysine isopeptide (Lys-Gly) (interchain with G-Cter in SUMO2) cross-link involves residue Lys271. Ser275 carries the post-translational modification Phosphoserine; by MKNK2. Phosphotyrosine; by ALK is present on Tyr285. RRM domains follow at residues 289–361 and 363–444; these read CRLF…FATH and AALS…PLEQ. Residue Lys306 is modified to N6,N6-dimethyllysine. Lys311 bears the N6-acetyllysine mark. Position 330 is an N6-acetyllysine; alternate (Lys330). Residue Lys330 forms a Glycyl lysine isopeptide (Lys-Gly) (interchain with G-Cter in SUMO2); alternate linkage. A Phosphothreonine modification is found at Thr360. Phosphoserine occurs at positions 366 and 371. N6-acetyllysine occurs at positions 413 and 464. Residue Ser488 is modified to Phosphoserine. Residues 489–588 are a coiled coil; it reads LDEMEKQQRE…EQMRRQREES (100 aa). At Arg563 the chain carries Dimethylated arginine. Residues 571–589 show a composition bias toward basic and acidic residues; the sequence is MIRQREMEEQMRRQREESY. The segment at 571-699 is disordered; it reads MIRQREMEEQ…YEGPNKKPRF (129 aa). Gly residues-rich tracts occupy residues 604–633 and 660–684; these read MGGG…GGIG and GQGG…AGYG. At Ser618 the chain carries Phosphoserine. Residue Arg673 is modified to Omega-N-methylarginine. Thr679 carries the phosphothreonine modification. Tyr683 carries the post-translational modification Phosphotyrosine. Position 685 is an omega-N-methylarginine; alternate (Arg685). Residue Arg685 is modified to Dimethylated arginine; alternate. A compositionally biased stretch (basic and acidic residues) spans 685–699; it reads RGREEYEGPNKKPRF. The residue at position 687 (Arg687) is an Omega-N-methylarginine.

Heterodimer with NONO. Monomer and component of the SFPQ-NONO complex, which is probably a heterotetramer of two 52 kDa (NONO) and two 100 kDa (SFPQ) subunits. The coiled coil domain mediates interaction with NONO, and can also mediate formation of long, linear homooligomers (in vitro). SFPQ is a component of spliceosome and U5.4/6 snRNP complexes. Interacts with SNRPA/U1A. Component of a snRNP-free complex with SNRPA/U1A. Part of complex consisting of SFPQ, NONO and MATR3. Interacts with polypyrimidine tract-binding protein 1/PTB. Part of a complex consisting of SFPQ, NONO and NR5A1. Interacts with RXRA, probably THRA, and SIN3A. Interacts with TOP1. Part of a complex consisting of SFPQ, NONO and TOP1. Interacts with SNRNP70 in apoptotic cells. Interacts with PSPC1. Interacts with RNF43. Interacts with PITX3 and NR4A2/NURR1. Interacts with PTK6. Interacts with THRAP3; the interaction is dependent on SFPQ phosphorylation at 'Thr-687' and inhibits binding of SFPQ to a ESS1 exonic splicing silencer element-containing RNA. The large PER complex involved in the histone deacetylation is composed of at least HDAC1, PER2, SFPQ and SIN3A. Interacts with PER1 and PER2. Part of the HDP-RNP complex composed of at least HEXIM1, PRKDC, XRCC5, XRCC6, paraspeckle proteins (SFPQ, NONO, PSPC1, RBM14, and MATR3) and NEAT1 RNA. Interacts with PQBP1. Component of a multiprotein complex with NONO and WASL. Interacts with ERCC6. Phosphorylated on multiple serine and threonine residues during apoptosis. Phosphorylation of C-terminal tyrosines promotes its cytoplasmic localization, impaired its binding to polypyrimidine RNA and led to cell cycle arrest. In resting T-cells is phosphorylated at Thr-679 by GSK3B which is proposed to promote association with THRAP and to prevent binding to PTPRC/CD45 pre-mRNA; T-cell activation leads to reduced phosphorylation at Thr-679.

The protein resides in the nucleus speckle. It is found in the nucleus matrix. Its subcellular location is the cytoplasm. In terms of biological role, DNA- and RNA binding protein, involved in several nuclear processes. Essential pre-mRNA splicing factor required early in spliceosome formation and for splicing catalytic step II, probably as a heteromer with NONO. Binds to pre-mRNA in spliceosome C complex, and specifically binds to intronic polypyrimidine tracts. Involved in regulation of signal-induced alternative splicing. During splicing of PTPRC/CD45, a phosphorylated form is sequestered by THRAP3 from the pre-mRNA in resting T-cells; T-cell activation and subsequent reduced phosphorylation is proposed to lead to release from THRAP3 allowing binding to pre-mRNA splicing regulatotry elements which represses exon inclusion. Interacts with U5 snRNA, probably by binding to a purine-rich sequence located on the 3' side of U5 snRNA stem 1b. May be involved in a pre-mRNA coupled splicing and polyadenylation process as component of a snRNP-free complex with SNRPA/U1A. The SFPQ-NONO heteromer associated with MATR3 may play a role in nuclear retention of defective RNAs. SFPQ may be involved in homologous DNA pairing; in vitro, promotes the invasion of ssDNA between a duplex DNA and produces a D-loop formation. The SFPQ-NONO heteromer may be involved in DNA unwinding by modulating the function of topoisomerase I/TOP1; in vitro, stimulates dissociation of TOP1 from DNA after cleavage and enhances its jumping between separate DNA helices. The SFPQ-NONO heteromer binds DNA. The SFPQ-NONO heteromer may be involved in DNA non-homologous end joining (NHEJ) required for double-strand break repair and V(D)J recombination and may stabilize paired DNA ends; in vitro, the complex strongly stimulates DNA end joining, binds directly to the DNA substrates and cooperates with the Ku70/G22P1-Ku80/XRCC5 (Ku) dimer to establish a functional preligation complex. SFPQ is involved in transcriptional regulation. Functions as a transcriptional activator. Transcriptional repression is mediated by an interaction of SFPQ with SIN3A and subsequent recruitment of histone deacetylases (HDACs). The SFPQ-NONO-NR5A1 complex binds to the CYP17 promoter and regulates basal and cAMP-dependent transcriptional activity. SFPQ isoform Long binds to the DNA binding domains (DBD) of nuclear hormone receptors, like RXRA and probably THRA, and acts as a transcriptional corepressor in absence of hormone ligands. Binds the DNA sequence 5'-CTGAGTC-3' in the insulin-like growth factor response element (IGFRE) and inhibits IGF1-stimulated transcriptional activity. Regulates the circadian clock by repressing the transcriptional activator activity of the CLOCK-BMAL1 heterodimer. Required for the transcriptional repression of circadian target genes, such as PER1, mediated by the large PER complex through histone deacetylation. Required for the assembly of nuclear speckles. Plays a role in the regulation of DNA virus-mediated innate immune response by assembling into the HDP-RNP complex, a complex that serves as a platform for IRF3 phosphorylation and subsequent innate immune response activation through the cGAS-STING pathway. The polypeptide is Splicing factor, proline- and glutamine-rich (Sfpq) (Mus musculus (Mouse)).